Consider the following 97-residue polypeptide: UPF0235 protein cbdbA1230 (97 aa).

The protein belongs to the UPF0235 family.

This Dehalococcoides mccartyi (strain CBDB1) protein is UPF0235 protein cbdbA1230.